The chain runs to 338 residues: Ketol-acid reductoisomerase (NADP(+)) (338 aa).

The KARI N-terminal Rossmann domain occupies 1–181 (MKVYYENDAD…GGTKAGVIET (181 aa)). NADP(+) is bound by residues 24 to 27 (FGSQ), Lys-47, Ser-50, Ser-52, and 82 to 85 (DQVQ). Residue His-107 is part of the active site. Residue Gly-133 coordinates NADP(+). In terms of domain architecture, KARI C-terminal knotted spans 182–327 (NFKDETETDL…EKLRGMMSWL (146 aa)). Residues Asp-190, Glu-194, Glu-226, and Glu-230 each contribute to the Mg(2+) site. Substrate is bound at residue Ser-251.

It belongs to the ketol-acid reductoisomerase family. It depends on Mg(2+) as a cofactor.

The enzyme catalyses (2R)-2,3-dihydroxy-3-methylbutanoate + NADP(+) = (2S)-2-acetolactate + NADPH + H(+). The catalysed reaction is (2R,3R)-2,3-dihydroxy-3-methylpentanoate + NADP(+) = (S)-2-ethyl-2-hydroxy-3-oxobutanoate + NADPH + H(+). Its pathway is amino-acid biosynthesis; L-isoleucine biosynthesis; L-isoleucine from 2-oxobutanoate: step 2/4. It participates in amino-acid biosynthesis; L-valine biosynthesis; L-valine from pyruvate: step 2/4. Involved in the biosynthesis of branched-chain amino acids (BCAA). Catalyzes an alkyl-migration followed by a ketol-acid reduction of (S)-2-acetolactate (S2AL) to yield (R)-2,3-dihydroxy-isovalerate. In the isomerase reaction, S2AL is rearranged via a Mg-dependent methyl migration to produce 3-hydroxy-3-methyl-2-ketobutyrate (HMKB). In the reductase reaction, this 2-ketoacid undergoes a metal-dependent reduction by NADPH to yield (R)-2,3-dihydroxy-isovalerate. The protein is Ketol-acid reductoisomerase (NADP(+)) of Chloroherpeton thalassium (strain ATCC 35110 / GB-78).